The sequence spans 439 residues: GTPase Der (439 aa).

EngA-type G domains lie at Pro4–Glu168 and Ile177–Thr352. GTP-binding positions include Gly10 to Ser17, Asp57 to Ile61, Asn120 to Asp123, Gly183 to Ser190, Asp230 to Leu234, and Asn295 to Asp298. Residues Lys353 to Lys437 form the KH-like domain.

This sequence belongs to the TRAFAC class TrmE-Era-EngA-EngB-Septin-like GTPase superfamily. EngA (Der) GTPase family. Associates with the 50S ribosomal subunit.

Functionally, GTPase that plays an essential role in the late steps of ribosome biogenesis. The chain is GTPase Der from Clostridium botulinum (strain Kyoto / Type A2).